Here is a 148-residue protein sequence, read N- to C-terminus: Urease accessory protein UreE (148 aa).

The protein belongs to the UreE family.

It localises to the cytoplasm. In terms of biological role, involved in urease metallocenter assembly. Binds nickel. Probably functions as a nickel donor during metallocenter assembly. The chain is Urease accessory protein UreE from Halalkalibacterium halodurans (strain ATCC BAA-125 / DSM 18197 / FERM 7344 / JCM 9153 / C-125) (Bacillus halodurans).